The following is a 202-amino-acid chain: Ribonuclease HII (202 aa).

The 189-residue stretch at 14-202 (LPLAGVDEAG…VAQFSLFPAA (189 aa)) folds into the RNase H type-2 domain. A divalent metal cation is bound by residues Asp20, Glu21, and Asp111.

Belongs to the RNase HII family. It depends on Mn(2+) as a cofactor. Mg(2+) serves as cofactor.

Its subcellular location is the cytoplasm. It carries out the reaction Endonucleolytic cleavage to 5'-phosphomonoester.. In terms of biological role, endonuclease that specifically degrades the RNA of RNA-DNA hybrids. This chain is Ribonuclease HII, found in Rhizorhabdus wittichii (strain DSM 6014 / CCUG 31198 / JCM 15750 / NBRC 105917 / EY 4224 / RW1) (Sphingomonas wittichii).